We begin with the raw amino-acid sequence, 147 residues long: UPF0178 protein Tgr7_2584 (147 aa).

The protein belongs to the UPF0178 family.

This Thioalkalivibrio sulfidiphilus (strain HL-EbGR7) protein is UPF0178 protein Tgr7_2584.